Reading from the N-terminus, the 155-residue chain is Myosin light chain alkali (155 aa).

2 EF-hand domains span residues 7-41 (REVE…LNLN) and 80-115 (GCYE…LGES).

As to quaternary structure, myosin is a hexamer of 2 heavy chains and 4 light chains. In terms of tissue distribution, indirect flight muscle isoform is found only in the indirect flight muscles. The larval and adult isoform is present in the larval and adult musculature.

The polypeptide is Myosin light chain alkali (Mlc1) (Drosophila melanogaster (Fruit fly)).